The primary structure comprises 382 residues: Mannitol-1-phosphate 5-dehydrogenase (382 aa).

3–14 serves as a coordination point for NAD(+); sequence ALHFGAGNIGRG.

Belongs to the mannitol dehydrogenase family.

The catalysed reaction is D-mannitol 1-phosphate + NAD(+) = beta-D-fructose 6-phosphate + NADH + H(+). This is Mannitol-1-phosphate 5-dehydrogenase from Pectobacterium atrosepticum (strain SCRI 1043 / ATCC BAA-672) (Erwinia carotovora subsp. atroseptica).